Here is a 198-residue protein sequence, read N- to C-terminus: Transcriptional regulator GfcR (198 aa).

It belongs to the purine/pyrimidine phosphoribosyltransferase family. GfcR subfamily.

The chain is Transcriptional regulator GfcR from Methanospirillum hungatei JF-1 (strain ATCC 27890 / DSM 864 / NBRC 100397 / JF-1).